The sequence spans 264 residues: Tropomyosin Cha f 1.0101 (264 aa).

Methionine 1 bears the N-acetylmethionine mark. Disordered regions lie at residues methionine 1 to glutamate 56 and isoleucine 92 to methionine 126. Residues methionine 1–lysine 264 adopt a coiled-coil conformation. Positions lysine 12–alanine 45 are enriched in basic and acidic residues.

It belongs to the tropomyosin family. As to quaternary structure, homodimer. Expressed in muscle (at protein level). Expressed in claw muscles.

Functionally, tropomyosin, in association with the troponin complex, plays a central role in the calcium dependent regulation of muscle contraction. The protein is Tropomyosin Cha f 1.0101 of Charybdis feriata (Crucifix crab).